The primary structure comprises 148 residues: Ubiquitin-conjugating enzyme E2 4 (148 aa).

Residues 1-22 form a disordered region; sequence MSSSKRIAKELSDLERDPPTSC. The region spanning 2 to 148 is the UBC core domain; that stretch reads SSSKRIAKEL…AREWTKKYAV (147 aa). The segment covering 7-18 has biased composition (basic and acidic residues); sequence IAKELSDLERDP. The residue at position 12 (S12) is a Phosphoserine. Catalysis depends on C86, which acts as the Glycyl thioester intermediate. K91 participates in a covalent cross-link: Glycyl lysine isopeptide (Lys-Gly) (interchain with G-Cter in ubiquitin).

It belongs to the ubiquitin-conjugating enzyme family. In terms of assembly, interacts with TUL1. The N-terminus is blocked.

The enzyme catalyses S-ubiquitinyl-[E1 ubiquitin-activating enzyme]-L-cysteine + [E2 ubiquitin-conjugating enzyme]-L-cysteine = [E1 ubiquitin-activating enzyme]-L-cysteine + S-ubiquitinyl-[E2 ubiquitin-conjugating enzyme]-L-cysteine.. It participates in protein modification; protein ubiquitination. Functionally, E2 ubiquitin-conjugating enzyme that catalyzes the covalent attachment of ubiquitin to other proteins. Mediates the selective degradation of short-lived and abnormal proteins. Mediates ubiquitination of PEX5. The protein is Ubiquitin-conjugating enzyme E2 4 of Saccharomyces cerevisiae (strain ATCC 204508 / S288c) (Baker's yeast).